A 390-amino-acid chain; its full sequence is tRNA(Met) cytidine acetate ligase (390 aa).

Residues 7-20 (VVEYNPFHNGHKLH), G101, N162, and R187 each bind ATP.

The protein belongs to the TmcAL family.

It is found in the cytoplasm. The catalysed reaction is cytidine(34) in elongator tRNA(Met) + acetate + ATP = N(4)-acetylcytidine(34) in elongator tRNA(Met) + AMP + diphosphate. Functionally, catalyzes the formation of N(4)-acetylcytidine (ac(4)C) at the wobble position of elongator tRNA(Met), using acetate and ATP as substrates. First activates an acetate ion to form acetyladenylate (Ac-AMP) and then transfers the acetyl group to tRNA to form ac(4)C34. The protein is tRNA(Met) cytidine acetate ligase of Listeria monocytogenes serotype 4b (strain F2365).